We begin with the raw amino-acid sequence, 281 residues long: Phosphonates import ATP-binding protein PhnC 2 (281 aa).

An ABC transporter domain is found at 4–238 (LTVDNVTKTY…LVDDLYGNVE (235 aa)). 35 to 42 (GESGAGKS) contacts ATP. A disordered region spans residues 243–281 (ATDNSDNSTVDTSDGTRYDTETGSDGTDEVDVIGRQVES). The span at 244–255 (TDNSDNSTVDTS) shows a compositional bias: low complexity.

The protein belongs to the ABC transporter superfamily. Phosphonates importer (TC 3.A.1.9.1) family. The complex is composed of two ATP-binding proteins (PhnC), two transmembrane proteins (PhnE) and a solute-binding protein (PhnD).

The protein resides in the cell membrane. The catalysed reaction is phosphonate(out) + ATP + H2O = phosphonate(in) + ADP + phosphate + H(+). Part of the ABC transporter complex PhnCDE involved in phosphonates import. Responsible for energy coupling to the transport system. This is Phosphonates import ATP-binding protein PhnC 2 from Haloquadratum walsbyi (strain DSM 16790 / HBSQ001).